We begin with the raw amino-acid sequence, 81 residues long: Small ribosomal subunit protein bS16 (81 aa).

Belongs to the bacterial ribosomal protein bS16 family.

The polypeptide is Small ribosomal subunit protein bS16 (Clostridium botulinum (strain Eklund 17B / Type B)).